Reading from the N-terminus, the 235-residue chain is Phosphoribosylaminoimidazole-succinocarboxamide synthase (235 aa).

It belongs to the SAICAR synthetase family.

It carries out the reaction 5-amino-1-(5-phospho-D-ribosyl)imidazole-4-carboxylate + L-aspartate + ATP = (2S)-2-[5-amino-1-(5-phospho-beta-D-ribosyl)imidazole-4-carboxamido]succinate + ADP + phosphate + 2 H(+). It functions in the pathway purine metabolism; IMP biosynthesis via de novo pathway; 5-amino-1-(5-phospho-D-ribosyl)imidazole-4-carboxamide from 5-amino-1-(5-phospho-D-ribosyl)imidazole-4-carboxylate: step 1/2. The protein is Phosphoribosylaminoimidazole-succinocarboxamide synthase of Streptococcus pneumoniae (strain JJA).